Here is a 1024-residue protein sequence, read N- to C-terminus: Isoleucine--tRNA ligase (1024 aa).

The 'HIGH' region motif lies at 52-62 (PTANGRPHVGH). A 'KMSKS' region motif is present at residues 590 to 594 (KMSKS). Residue Lys-593 participates in ATP binding.

Belongs to the class-I aminoacyl-tRNA synthetase family. IleS type 2 subfamily. In terms of assembly, monomer. Zn(2+) serves as cofactor.

The protein localises to the cytoplasm. It carries out the reaction tRNA(Ile) + L-isoleucine + ATP = L-isoleucyl-tRNA(Ile) + AMP + diphosphate. Its function is as follows. Catalyzes the attachment of isoleucine to tRNA(Ile). As IleRS can inadvertently accommodate and process structurally similar amino acids such as valine, to avoid such errors it has two additional distinct tRNA(Ile)-dependent editing activities. One activity is designated as 'pretransfer' editing and involves the hydrolysis of activated Val-AMP. The other activity is designated 'posttransfer' editing and involves deacylation of mischarged Val-tRNA(Ile). This is Isoleucine--tRNA ligase from Picrophilus torridus (strain ATCC 700027 / DSM 9790 / JCM 10055 / NBRC 100828 / KAW 2/3).